The sequence spans 382 residues: Dual-specificity RNA methyltransferase RlmN (382 aa).

Residue Glu-96 is the Proton acceptor of the active site. In terms of domain architecture, Radical SAM core spans 102–342 (QGKRGTLCVS…VRTTRGEDID (241 aa)). The cysteines at positions 109 and 345 are disulfide-linked. [4Fe-4S] cluster-binding residues include Cys-116, Cys-120, and Cys-123. Residues 170-171 (GE), Ser-202, 224-226 (SLH), and Asn-302 each bind S-adenosyl-L-methionine. Cys-345 acts as the S-methylcysteine intermediate in catalysis.

This sequence belongs to the radical SAM superfamily. RlmN family. It depends on [4Fe-4S] cluster as a cofactor.

It localises to the cytoplasm. It carries out the reaction adenosine(2503) in 23S rRNA + 2 reduced [2Fe-2S]-[ferredoxin] + 2 S-adenosyl-L-methionine = 2-methyladenosine(2503) in 23S rRNA + 5'-deoxyadenosine + L-methionine + 2 oxidized [2Fe-2S]-[ferredoxin] + S-adenosyl-L-homocysteine. It catalyses the reaction adenosine(37) in tRNA + 2 reduced [2Fe-2S]-[ferredoxin] + 2 S-adenosyl-L-methionine = 2-methyladenosine(37) in tRNA + 5'-deoxyadenosine + L-methionine + 2 oxidized [2Fe-2S]-[ferredoxin] + S-adenosyl-L-homocysteine. Specifically methylates position 2 of adenine 2503 in 23S rRNA and position 2 of adenine 37 in tRNAs. m2A2503 modification seems to play a crucial role in the proofreading step occurring at the peptidyl transferase center and thus would serve to optimize ribosomal fidelity. The sequence is that of Dual-specificity RNA methyltransferase RlmN from Pseudomonas fluorescens (strain Pf0-1).